Consider the following 290-residue polypeptide: Glycine--tRNA ligase alpha subunit (290 aa).

It belongs to the class-II aminoacyl-tRNA synthetase family. Tetramer of two alpha and two beta subunits.

Its subcellular location is the cytoplasm. It catalyses the reaction tRNA(Gly) + glycine + ATP = glycyl-tRNA(Gly) + AMP + diphosphate. This Brachyspira hyodysenteriae (strain ATCC 49526 / WA1) protein is Glycine--tRNA ligase alpha subunit.